The chain runs to 112 residues: UPF0060 membrane protein Daro_2632 (112 aa).

4 helical membrane-spanning segments follow: residues 7–27 (VLGL…LPWL), 34–54 (PVWL…LLTL), 59–79 (AGRI…IWLW), and 89–109 (WDLV…LQPA).

It belongs to the UPF0060 family.

It localises to the cell inner membrane. This is UPF0060 membrane protein Daro_2632 from Dechloromonas aromatica (strain RCB).